We begin with the raw amino-acid sequence, 384 residues long: Lipid-A-disaccharide synthase (384 aa).

The protein belongs to the LpxB family.

The enzyme catalyses 2-N,3-O-bis[(3R)-3-hydroxytetradecanoyl]-alpha-D-glucosaminyl 1-phosphate + UDP-2-N,3-O-bis[(3R)-3-hydroxytetradecanoyl]-alpha-D-glucosamine = lipid A disaccharide (E. coli) + UDP + H(+). The catalysed reaction is a lipid X + a UDP-2-N,3-O-bis[(3R)-3-hydroxyacyl]-alpha-D-glucosamine = a lipid A disaccharide + UDP + H(+). Its pathway is glycolipid biosynthesis; lipid IV(A) biosynthesis; lipid IV(A) from (3R)-3-hydroxytetradecanoyl-[acyl-carrier-protein] and UDP-N-acetyl-alpha-D-glucosamine: step 5/6. In terms of biological role, condensation of UDP-2,3-diacylglucosamine and 2,3-diacylglucosamine-1-phosphate to form lipid A disaccharide, a precursor of lipid A, a phosphorylated glycolipid that anchors the lipopolysaccharide to the outer membrane of the cell. The polypeptide is Lipid-A-disaccharide synthase (Blochmanniella floridana).